The primary structure comprises 244 residues: Carboxy-S-adenosyl-L-methionine synthase (244 aa).

S-adenosyl-L-methionine-binding positions include Tyr-41, 66 to 68 (GCS), 91 to 92 (DN), 119 to 120 (DI), Asn-134, and Arg-201.

This sequence belongs to the class I-like SAM-binding methyltransferase superfamily. Cx-SAM synthase family. Homodimer.

The enzyme catalyses prephenate + S-adenosyl-L-methionine = carboxy-S-adenosyl-L-methionine + 3-phenylpyruvate + H2O. In terms of biological role, catalyzes the conversion of S-adenosyl-L-methionine (SAM) to carboxy-S-adenosyl-L-methionine (Cx-SAM). The sequence is that of Carboxy-S-adenosyl-L-methionine synthase from Photobacterium profundum (strain SS9).